The sequence spans 109 residues: Anther-specific protein MZm3-3 (109 aa).

The first 41 residues, 1 to 41, serve as a signal peptide directing secretion; the sequence is MTATTTTAAGGGKVQPRGLPVALSLLLLLVLAAGLGGGAEA. Intrachain disulfides connect C45/C86, C55/C75, C76/C101, and C88/C108.

This sequence belongs to the A9/FIL1 family. As to expression, tapetum of anthers.

The protein resides in the secreted. The polypeptide is Anther-specific protein MZm3-3 (Zea mays (Maize)).